A 230-amino-acid polypeptide reads, in one-letter code: Demethylmenaquinone methyltransferase (230 aa).

S-adenosyl-L-methionine is bound by residues threonine 62, aspartate 80, 100-101 (DG), and serine 117.

Belongs to the class I-like SAM-binding methyltransferase superfamily. MenG/UbiE family.

It carries out the reaction a 2-demethylmenaquinol + S-adenosyl-L-methionine = a menaquinol + S-adenosyl-L-homocysteine + H(+). Its pathway is quinol/quinone metabolism; menaquinone biosynthesis; menaquinol from 1,4-dihydroxy-2-naphthoate: step 2/2. Methyltransferase required for the conversion of demethylmenaquinol (DMKH2) to menaquinol (MKH2). The chain is Demethylmenaquinone methyltransferase from Corynebacterium glutamicum (strain R).